The primary structure comprises 435 residues: Gamma-glutamyl phosphate reductase (435 aa).

This sequence belongs to the gamma-glutamyl phosphate reductase family.

It is found in the cytoplasm. The catalysed reaction is L-glutamate 5-semialdehyde + phosphate + NADP(+) = L-glutamyl 5-phosphate + NADPH + H(+). It functions in the pathway amino-acid biosynthesis; L-proline biosynthesis; L-glutamate 5-semialdehyde from L-glutamate: step 2/2. Its function is as follows. Catalyzes the NADPH-dependent reduction of L-glutamate 5-phosphate into L-glutamate 5-semialdehyde and phosphate. The product spontaneously undergoes cyclization to form 1-pyrroline-5-carboxylate. The polypeptide is Gamma-glutamyl phosphate reductase (Xylella fastidiosa (strain M12)).